The following is a 119-amino-acid chain: Large ribosomal subunit protein bL17 (119 aa).

This sequence belongs to the bacterial ribosomal protein bL17 family. As to quaternary structure, part of the 50S ribosomal subunit. Contacts protein L32.

The chain is Large ribosomal subunit protein bL17 from Mesoplasma florum (strain ATCC 33453 / NBRC 100688 / NCTC 11704 / L1) (Acholeplasma florum).